Reading from the N-terminus, the 421-residue chain is F-box only protein 5 (421 aa).

Position 85 is a phosphoserine (Ser-85). Residues 114-219 (ELEASRLYED…IGKKMGLEHL (106 aa)) form an interaction with EVI5 region. In terms of domain architecture, F-box spans 223 to 273 (AELSRRGFVHLLANILTKLSGMDLVNLSKVSRIWKKILENNKGAFQLYSKT). Residues 236–313 (NILTKLSGMD…KSSTWAPPKK (78 aa)) form a sufficient for interaction with RPS6KA2; Prevents association of CDC20 with RPS6KA2 region. Positions 236-383 (NILTKLSGMD…SCQFEYCTKC (148 aa)) are requires for efficient binding to CDC20. The tract at residues 280–421 (SSKLSLHATT…KKSKKNLQRL (142 aa)) is inhibits APC ubiquitin ligase activity. The competitively blocks access of APC substrates to the D-box coreceptor formed by FZR1 and ANAPC10 stretch occupies residues 296–299 (RAAL). The segment at 348-396 (SLKACVRCNFPAKYDHYLERAVCKRESCQFEYCTKCLCAYHNNKDCLNG) adopts a ZBR-type zinc-finger fold. Residues Cys-352, Cys-355, Cys-370, Cys-375, Cys-380, Cys-383, His-388, and Cys-393 each coordinate Zn(2+). Positions 352–394 (CVRCNFPAKYDHYLERAVCKRESCQFEYCTKCLCAYHNNKDCL) are allows a rapid multiple mono-ubiquitination of the APC substrate, but strongly inhibits the slow ubiquitin chain elongation catalyzed by UBCH10. The tract at residues 411 to 421 (TKKSKKNLQRL) is sufficient to suppress UBE2S activity; essential for interaction with UBE2S; competitively inhibits the rapide ubiquitin chain elongation by UBE2D1 which blocks UBE2D1 with APC; indispensable for recruitment and position of FBXO5 to the catalytic site of APC; abrogates the inhibition of ubiquitin chain assembly primarily catalyzed by UBE2S; inhibits the ubiquitination by either UBE2C or UBE2D1.

As to quaternary structure, part of a SCF (SKP1-cullin-F-box) protein ligase complex. Interacts with BTRC; mediates proteolysis by the SCF ubiquitin ligase complex leading to activation of APC in late mitosis and subsequent mitotic progression. Interacts with FZR1/CDH1 and the N-terminal substrate-binding domain of CDC20; prevents APC activation. Also interacts with EVI5 which blocks its phosphorylation by PLK1 and prevents its subsequent binding to BTRC and degradation. Interacts simultaneously with anaphase promoting complex (APC), through at least ANAPC2, CDC23, CDC27, the APC substrate GMNN and the APC activator FZR1. Interacts with UBE2S; interferes with the activity of UBE2S mainly by disrupting the dynamic electrostatic association between the C-terminal tail of UBE2S and ANAPC2. Interacts with RPS6KA2; cooperates to induce the metaphase arrest of early blastomeres; increases and stabilizes interaction of FBXO5 with CDC20. In terms of processing, phosphorylation by CDK2 and subsequently by PLK1 triggers degradation during early mitosis through ubiquitin-mediated proteolysis by the SCF ubiquitin ligase complex containing the F-box protein BTRC. This degradation is necessary for the activation of APC in late mitosis and subsequent mitotic progression. Phosphorylated by RPS6KA2; increases and stabilizes interaction with CDC20. Post-translationally, ubiquitinated by the SCF(BTRC) complex following phosphorylation by PLK1. Undergoes both 'Lys-11' and 'Lys-48'-linked polyubiquitination by APC-FZR1 complex leading to degradation during G1 phase by the proteasome. Degraded through the SCF(BTRC) complex; degradation occurs during oocyte maturation, between germinal vesicle breakdown (GVBD) and meiosis I, and is required for the meiosis I-meiosis II transition. Expressed in oocytes and granulosa cells. Expressed in proliferating cells compartments in hair follicle and skin epidermis, spermatogonia, and intestinal crypts.

The protein resides in the nucleus. It localises to the cytoplasm. It is found in the cytoskeleton. The protein localises to the spindle. Its pathway is protein modification; protein ubiquitination. Functionally, regulator of APC activity during mitotic and meiotic cell cycle. During mitotic cell cycle plays a role as both substrate and inhibitor of APC-FZR1 complex. During G1 phase, plays a role as substrate of APC-FZR1 complex E3 ligase. Then switches as an inhibitor of APC-FZR1 complex during S and G2 leading to cell-cycle commitment. As APC inhibitor, prevents the degradation of APC substrates at multiple levels: by interacting with APC and blocking access of APC substrates to the D-box co-receptor, formed by FZR1 and ANAPC10; by suppressing ubiquitin ligation and chain elongation by APC by preventing the UBE2C and UBE2S activities. Plays a role in genome integrity preservation by coordinating DNA replication with mitosis through APC inhibition in interphase to stabilize CCNA2 and GMNN in order to promote mitosis and prevent rereplication and DNA damage-induced cellular senescence. During oocyte maturation, plays a role in meiosis through inactivation of APC-FZR1 complex. Inhibits APC through RPS6KA2 interaction that increases FBXO5 affiniy for CDC20 leading to the metaphase arrest of the second meiotic division before fertilization. Controls entry into the first meiotic division through inactivation of APC-FZR1 complex. Promotes migration and osteogenic differentiation of mesenchymal stem cells. The polypeptide is F-box only protein 5 (Mus musculus (Mouse)).